The primary structure comprises 112 residues: Large ribosomal subunit protein P2A (112 aa).

The disordered stretch occupies residues 83-112 (GAAPAAEAKKEEKVEEKEESDDDMGFSLFD). Residues 89-98 (EAKKEEKVEE) are compositionally biased toward basic and acidic residues.

It belongs to the eukaryotic ribosomal protein P1/P2 family. P1 and P2 exist as dimers at the large ribosomal subunit. Phosphorylated.

Functionally, plays an important role in the elongation step of protein synthesis. This chain is Large ribosomal subunit protein P2A (RPP2A), found in Zea mays (Maize).